The sequence spans 194 residues: Xanthine phosphoribosyltransferase (194 aa).

Residues Leu-20 and Asn-27 each contribute to the xanthine site. Position 128-132 (128-132 (ANGQA)) interacts with 5-phospho-alpha-D-ribose 1-diphosphate. A xanthine-binding site is contributed by Lys-156.

It belongs to the purine/pyrimidine phosphoribosyltransferase family. Xpt subfamily. Homodimer.

Its subcellular location is the cytoplasm. It carries out the reaction XMP + diphosphate = xanthine + 5-phospho-alpha-D-ribose 1-diphosphate. It functions in the pathway purine metabolism; XMP biosynthesis via salvage pathway; XMP from xanthine: step 1/1. Converts the preformed base xanthine, a product of nucleic acid breakdown, to xanthosine 5'-monophosphate (XMP), so that it can be reused for RNA or DNA synthesis. This is Xanthine phosphoribosyltransferase (xpt) from Bacillus subtilis (strain 168).